Reading from the N-terminus, the 360-residue chain is Protein NDRG2 (360 aa).

The interval 325–360 (RTASLSSEGNRSRSRTLSQSSESGGGPPAPLAEVTC) is disordered.

Belongs to the NDRG family.

Its subcellular location is the cytoplasm. Functionally, contributes to the regulation of the Wnt signaling pathway. Down-regulates CTNNB1-mediated transcriptional activation of target genes. May be involved in neuron differentiation. The polypeptide is Protein NDRG2 (Xenopus tropicalis (Western clawed frog)).